Here is a 265-residue protein sequence, read N- to C-terminus: NAD kinase (265 aa).

The Proton acceptor role is filled by aspartate 45. Residues 45–46, 122–123, arginine 148, aspartate 150, 161–166, alanine 185, and glutamine 223 contribute to the NAD(+) site; these read DG, NE, and TAYNKS.

The protein belongs to the NAD kinase family. Requires a divalent metal cation as cofactor.

The protein resides in the cytoplasm. The enzyme catalyses NAD(+) + ATP = ADP + NADP(+) + H(+). Functionally, involved in the regulation of the intracellular balance of NAD and NADP, and is a key enzyme in the biosynthesis of NADP. Catalyzes specifically the phosphorylation on 2'-hydroxyl of the adenosine moiety of NAD to yield NADP. This chain is NAD kinase, found in Enterococcus faecalis (strain ATCC 700802 / V583).